Reading from the N-terminus, the 268-residue chain is Interleukin-1 beta (268 aa).

Residues methionine 1–aspartate 116 constitute a propeptide that is removed on maturation.

Belongs to the IL-1 family. As to quaternary structure, monomer. In its precursor form, weakly interacts with full-length MEFV; the mature cytokine does not interact at all. Interacts with integrins ITGAV:ITGBV and ITGA5:ITGB1; integrin-binding is required for IL1B signaling. Interacts with cargo receptor TMED10; the interaction is direct and is required for the secretion of IL1B mature form. Interacts with HSP90AB1; the interaction facilitates cargo translocation into the ERGIC. Interacts with HSP90B1; the interaction facilitates cargo translocation into the ERGIC.

The protein localises to the cytoplasm. The protein resides in the cytosol. It is found in the secreted. It localises to the lysosome. Its subcellular location is the extracellular exosome. Functionally, potent pro-inflammatory cytokine. Initially discovered as the major endogenous pyrogen, induces prostaglandin synthesis, neutrophil influx and activation, T-cell activation and cytokine production, B-cell activation and antibody production, and fibroblast proliferation and collagen production. Promotes Th17 differentiation of T-cells. Synergizes with IL12/interleukin-12 to induce IFNG synthesis from T-helper 1 (Th1) cells. Plays a role in angiogenesis by inducing VEGF production synergistically with TNF and IL6. Involved in transduction of inflammation downstream of pyroptosis: its mature form is specifically released in the extracellular milieu by passing through the gasdermin-D (GSDMD) pore. This Oryctolagus cuniculus (Rabbit) protein is Interleukin-1 beta (IL1B).